We begin with the raw amino-acid sequence, 98 residues long: MAETKYEVTYIIRPDLDDAAKTELVERFDNILKENGANIIDSKDWQKRKLAYEINKYNEGLYHIVNLSAEDDKAINEFDRLGKINNDILRHMIVKRED.

This sequence belongs to the bacterial ribosomal protein bS6 family.

Its function is as follows. Binds together with bS18 to 16S ribosomal RNA. The sequence is that of Small ribosomal subunit protein bS6 from Lacticaseibacillus paracasei (strain ATCC 334 / BCRC 17002 / CCUG 31169 / CIP 107868 / KCTC 3260 / NRRL B-441) (Lactobacillus paracasei).